Here is an 83-residue protein sequence, read N- to C-terminus: MVTIRLARGGSKKRPFYHLTVTNSRNARDGRFVERVGFFNPIAAGAEVKLSVNQERVTYWLSQGAQPSERVAQLLKEAAKAAA.

The protein belongs to the bacterial ribosomal protein bS16 family.

The chain is Small ribosomal subunit protein bS16 from Pseudomonas putida (strain ATCC 700007 / DSM 6899 / JCM 31910 / BCRC 17059 / LMG 24140 / F1).